We begin with the raw amino-acid sequence, 664 residues long: DNA ligase (664 aa).

NAD(+) contacts are provided by residues 32–36 (DKEYD) and 80–81 (SL). Lysine 122 (N6-AMP-lysine intermediate) is an active-site residue. Residues arginine 144, glutamate 178, and lysine 314 each coordinate NAD(+). Zn(2+) contacts are provided by cysteine 407, cysteine 410, cysteine 423, and cysteine 429. One can recognise a BRCT domain in the interval 587 to 664 (IDENPFMDKT…NEEEFSNKIK (78 aa)).

This sequence belongs to the NAD-dependent DNA ligase family. LigA subfamily. It depends on Mg(2+) as a cofactor. Requires Mn(2+) as cofactor.

It carries out the reaction NAD(+) + (deoxyribonucleotide)n-3'-hydroxyl + 5'-phospho-(deoxyribonucleotide)m = (deoxyribonucleotide)n+m + AMP + beta-nicotinamide D-nucleotide.. DNA ligase that catalyzes the formation of phosphodiester linkages between 5'-phosphoryl and 3'-hydroxyl groups in double-stranded DNA using NAD as a coenzyme and as the energy source for the reaction. It is essential for DNA replication and repair of damaged DNA. This Clostridium botulinum (strain ATCC 19397 / Type A) protein is DNA ligase.